The following is a 236-amino-acid chain: L-aspartate dehydrogenase (236 aa).

NAD(+) is bound by residues 10–11 (AI), Asp31, 58–59 (AS), Tyr66, 80–81 (LS), Ala111, and Asn162. His189 is a catalytic residue. Position 212–215 (212–215 (NPKT)) interacts with NAD(+).

Belongs to the L-aspartate dehydrogenase family. In terms of assembly, homodimer.

It carries out the reaction L-aspartate + NADP(+) + H2O = oxaloacetate + NH4(+) + NADPH + H(+). It catalyses the reaction L-aspartate + NAD(+) + H2O = oxaloacetate + NH4(+) + NADH + H(+). It participates in cofactor biosynthesis; NAD(+) biosynthesis; iminoaspartate from L-aspartate (dehydrogenase route): step 1/1. Its function is as follows. Specifically catalyzes the NAD or NADP-dependent dehydrogenation of L-aspartate to iminoaspartate. This is L-aspartate dehydrogenase from Archaeoglobus fulgidus (strain ATCC 49558 / DSM 4304 / JCM 9628 / NBRC 100126 / VC-16).